We begin with the raw amino-acid sequence, 249 residues long: Glutathione S-transferase S1 (249 aa).

Residues 1–38 (MADEAQAPPAEGAPPAEGEAPPPAEGAEGAVEGGEAAP) show a composition bias toward low complexity. Positions 1–42 (MADEAQAPPAEGAPPAEGEAPPPAEGAEGAVEGGEAAPPAEP) are disordered. The GST N-terminal domain maps to 48 to 125 (HSYTLFYFNV…FLAKTVGLCG (78 aa)). Residues Tyr54, Trp85, Lys89, 96–97 (QM), and 109–110 (QS) each bind glutathione. Positions 127-249 (TPWEDLQIDI…WIEKRPVTEV (123 aa)) constitute a GST C-terminal domain.

The protein belongs to the GST superfamily. Sigma family. As to quaternary structure, homodimer.

The catalysed reaction is RX + glutathione = an S-substituted glutathione + a halide anion + H(+). Functionally, conjugation of reduced glutathione to a wide number of exogenous and endogenous hydrophobic electrophiles. May be involved in the detoxification of metabolites produced during cellular division and morphogenesis. This Drosophila melanogaster (Fruit fly) protein is Glutathione S-transferase S1.